The primary structure comprises 429 residues: Phosphoribosylamine--glycine ligase (429 aa).

One can recognise an ATP-grasp domain in the interval 109–316; sequence KDFLARHQIP…LVELCLAAID (208 aa). 135–196 contacts ATP; that stretch reads VREQGAPIVV…EEFLDGEEAS (62 aa). Positions 212–234 are disordered; the sequence is SQDHKRVGDKDTGPNTGGMGAYS. A compositionally biased stretch (basic and acidic residues) spans 213 to 223; the sequence is QDHKRVGDKDT. Glutamate 286 and asparagine 288 together coordinate Mg(2+).

This sequence belongs to the GARS family. Mg(2+) is required as a cofactor. The cofactor is Mn(2+).

The enzyme catalyses 5-phospho-beta-D-ribosylamine + glycine + ATP = N(1)-(5-phospho-beta-D-ribosyl)glycinamide + ADP + phosphate + H(+). The protein operates within purine metabolism; IMP biosynthesis via de novo pathway; N(1)-(5-phospho-D-ribosyl)glycinamide from 5-phospho-alpha-D-ribose 1-diphosphate: step 2/2. In Vibrio vulnificus (strain CMCP6), this protein is Phosphoribosylamine--glycine ligase.